Consider the following 528-residue polypeptide: Phosphoenolpyruvate carboxykinase (ATP) (528 aa).

Positions 56, 192, and 198 each coordinate substrate. ATP contacts are provided by residues lysine 198, histidine 217, and 233 to 241 (GLSGTGKTT). Mn(2+) contacts are provided by lysine 198 and histidine 217. Residue aspartate 254 coordinates Mn(2+). ATP contacts are provided by glutamate 282, arginine 319, and threonine 444. Arginine 319 is a binding site for substrate.

The protein belongs to the phosphoenolpyruvate carboxykinase (ATP) family. The cofactor is Mn(2+).

Its subcellular location is the cytoplasm. It carries out the reaction oxaloacetate + ATP = phosphoenolpyruvate + ADP + CO2. It functions in the pathway carbohydrate biosynthesis; gluconeogenesis. Its function is as follows. Involved in the gluconeogenesis. Catalyzes the conversion of oxaloacetate (OAA) to phosphoenolpyruvate (PEP) through direct phosphoryl transfer between the nucleoside triphosphate and OAA. This chain is Phosphoenolpyruvate carboxykinase (ATP), found in Bacillus cytotoxicus (strain DSM 22905 / CIP 110041 / 391-98 / NVH 391-98).